A 411-amino-acid chain; its full sequence is Cladofulvin cluster transcriptional coactivator claA (411 aa).

Over residues 1–27 the composition is skewed to polar residues; that stretch reads MSDSLAGNGMRQNLNRSSTSSNHTGHA. Residues 1-32 form a disordered region; that stretch reads MSDSLAGNGMRQNLNRSSTSSNHTGHAQNGRA. Residues 47–117 enclose the HTH iclR-type domain; it reads LACQVQSLAC…DPGHIAHTAL (71 aa). The segment at residues 77–96 is a DNA-binding region (H-T-H motif); it reads LHDVAELANVPASQLSRVVR.

Its subcellular location is the nucleus. Functionally, transcriptional coactivator; part of the gene cluster that mediates the biosynthesis of cladofulvin, a conidial pigment not required for virulence but that plays a role in fitness and resistance to environmental stresses including UV light and low-temperature stress. With claE, coregulates the production of cladofulvin. The polypeptide is Cladofulvin cluster transcriptional coactivator claA (Passalora fulva (Tomato leaf mold)).